A 430-amino-acid polypeptide reads, in one-letter code: UDP-N-acetylglucosamine 1-carboxyvinyltransferase (430 aa).

Position 22 to 23 (22 to 23 (KN)) interacts with phosphoenolpyruvate. Residue Arg-102 coordinates UDP-N-acetyl-alpha-D-glucosamine. The active-site Proton donor is Cys-126. Position 126 is a 2-(S-cysteinyl)pyruvic acid O-phosphothioketal (Cys-126). Residues 131–135 (RPVDL), 172–175 (KVSV), Asp-317, and Ile-339 contribute to the UDP-N-acetyl-alpha-D-glucosamine site.

The protein belongs to the EPSP synthase family. MurA subfamily.

Its subcellular location is the cytoplasm. The enzyme catalyses phosphoenolpyruvate + UDP-N-acetyl-alpha-D-glucosamine = UDP-N-acetyl-3-O-(1-carboxyvinyl)-alpha-D-glucosamine + phosphate. The protein operates within cell wall biogenesis; peptidoglycan biosynthesis. Its function is as follows. Cell wall formation. Adds enolpyruvyl to UDP-N-acetylglucosamine. The sequence is that of UDP-N-acetylglucosamine 1-carboxyvinyltransferase from Rhizobium meliloti (strain 1021) (Ensifer meliloti).